The primary structure comprises 384 residues: Queuine tRNA-ribosyltransferase (384 aa).

The active-site Proton acceptor is the aspartate 92. Residues 92–96, aspartate 146, glutamine 190, and glycine 217 each bind substrate; that span reads DSGGF. The interval 248–254 is RNA binding; the sequence is GVGRPED. The Nucleophile role is filled by aspartate 267. The tract at residues 272 to 276 is RNA binding; important for wobble base 34 recognition; that stretch reads TRHAR. Residues cysteine 305, cysteine 307, cysteine 310, and histidine 337 each coordinate Zn(2+).

The protein belongs to the queuine tRNA-ribosyltransferase family. As to quaternary structure, homodimer. Within each dimer, one monomer is responsible for RNA recognition and catalysis, while the other monomer binds to the replacement base PreQ1. It depends on Zn(2+) as a cofactor.

It carries out the reaction 7-aminomethyl-7-carbaguanine + guanosine(34) in tRNA = 7-aminomethyl-7-carbaguanosine(34) in tRNA + guanine. Its pathway is tRNA modification; tRNA-queuosine biosynthesis. Catalyzes the base-exchange of a guanine (G) residue with the queuine precursor 7-aminomethyl-7-deazaguanine (PreQ1) at position 34 (anticodon wobble position) in tRNAs with GU(N) anticodons (tRNA-Asp, -Asn, -His and -Tyr). Catalysis occurs through a double-displacement mechanism. The nucleophile active site attacks the C1' of nucleotide 34 to detach the guanine base from the RNA, forming a covalent enzyme-RNA intermediate. The proton acceptor active site deprotonates the incoming PreQ1, allowing a nucleophilic attack on the C1' of the ribose to form the product. After dissociation, two additional enzymatic reactions on the tRNA convert PreQ1 to queuine (Q), resulting in the hypermodified nucleoside queuosine (7-(((4,5-cis-dihydroxy-2-cyclopenten-1-yl)amino)methyl)-7-deazaguanosine). The sequence is that of Queuine tRNA-ribosyltransferase from Xylella fastidiosa (strain M12).